A 302-amino-acid chain; its full sequence is GrpE protein homolog 1, mitochondrial (302 aa).

The N-terminal 39 residues, 1–39 (MLVSRVLSRVSRSAGLRSSFSSVVTPKRNQIPIVASRFH), are a transit peptide targeting the mitochondrion. A disordered region spans residues 77–97 (SAEPKGNESNTEVPKTGETSE).

The protein belongs to the GrpE family. In terms of assembly, probable component of the PAM complex, at least composed of SSC1 (mtHsp70), MGE1, TIM44, PAM16/TIM16, PAM17 and PAM18/TIM14. Interacts with SSQ1.

Its subcellular location is the mitochondrion matrix. In terms of biological role, essential component of the PAM complex, a complex required for the translocation of transit peptide-containing proteins from the inner membrane into the mitochondrial matrix in an ATP-dependent manner. Seems to control the nucleotide-dependent binding of mitochondrial HSP70 to substrate proteins. Binds ATP. Interacts with copper ions Cu(2+). The protein is GrpE protein homolog 1, mitochondrial of Arabidopsis thaliana (Mouse-ear cress).